The sequence spans 325 residues: tRNA N6-adenosine threonylcarbamoyltransferase (325 aa).

2 residues coordinate Fe cation: H111 and H115. Substrate is bound by residues 134-138 (LVSGG), D167, G180, D184, and N284. Fe cation is bound at residue D312.

It belongs to the KAE1 / TsaD family. Requires Fe(2+) as cofactor.

The protein localises to the cytoplasm. The catalysed reaction is L-threonylcarbamoyladenylate + adenosine(37) in tRNA = N(6)-L-threonylcarbamoyladenosine(37) in tRNA + AMP + H(+). Its function is as follows. Required for the formation of a threonylcarbamoyl group on adenosine at position 37 (t(6)A37) in tRNAs that read codons beginning with adenine. Is involved in the transfer of the threonylcarbamoyl moiety of threonylcarbamoyl-AMP (TC-AMP) to the N6 group of A37, together with TsaE and TsaB. TsaD likely plays a direct catalytic role in this reaction. The sequence is that of tRNA N6-adenosine threonylcarbamoyltransferase from Trichodesmium erythraeum (strain IMS101).